Reading from the N-terminus, the 297-residue chain is Mycothiol acetyltransferase (297 aa).

Glutamate 35 contributes to the 1D-myo-inositol 2-(L-cysteinylamino)-2-deoxy-alpha-D-glucopyranoside binding site. Residue 73-75 (MLV) coordinates acetyl-CoA. Positions 155 to 297 (LRTFGGTEAE…VAVHAQYGIP (143 aa)) constitute an N-acetyltransferase domain. The 1D-myo-inositol 2-(L-cysteinylamino)-2-deoxy-alpha-D-glucopyranoside site is built by glutamate 181, lysine 222, and glutamate 230. Acetyl-CoA is bound by residues 234 to 236 (LGV) and 241 to 247 (QGRGLGR). 1D-myo-inositol 2-(L-cysteinylamino)-2-deoxy-alpha-D-glucopyranoside is bound at residue tyrosine 268.

It belongs to the acetyltransferase family. MshD subfamily. Monomer.

It carries out the reaction 1D-myo-inositol 2-(L-cysteinylamino)-2-deoxy-alpha-D-glucopyranoside + acetyl-CoA = mycothiol + CoA + H(+). Its function is as follows. Catalyzes the transfer of acetyl from acetyl-CoA to desacetylmycothiol (Cys-GlcN-Ins) to form mycothiol. The polypeptide is Mycothiol acetyltransferase (Beutenbergia cavernae (strain ATCC BAA-8 / DSM 12333 / CCUG 43141 / JCM 11478 / NBRC 16432 / NCIMB 13614 / HKI 0122)).